The sequence spans 156 residues: Small ribosomal subunit protein uS7 (156 aa).

Belongs to the universal ribosomal protein uS7 family. Part of the 30S ribosomal subunit. Contacts proteins S9 and S11.

One of the primary rRNA binding proteins, it binds directly to 16S rRNA where it nucleates assembly of the head domain of the 30S subunit. Is located at the subunit interface close to the decoding center, probably blocks exit of the E-site tRNA. The chain is Small ribosomal subunit protein uS7 from Lactobacillus helveticus (strain DPC 4571).